Here is a 360-residue protein sequence, read N- to C-terminus: Peptide chain release factor 1 (360 aa).

Glutamine 235 carries the post-translational modification N5-methylglutamine. Positions 283 to 293 (EREAQAKEASA) are enriched in basic and acidic residues. The segment at 283–305 (EREAQAKEASARKSLIGSGDRSD) is disordered.

Belongs to the prokaryotic/mitochondrial release factor family. Methylated by PrmC. Methylation increases the termination efficiency of RF1.

Its subcellular location is the cytoplasm. Functionally, peptide chain release factor 1 directs the termination of translation in response to the peptide chain termination codons UAG and UAA. The chain is Peptide chain release factor 1 from Ralstonia pickettii (strain 12J).